Here is a 276-residue protein sequence, read N- to C-terminus: Diaminopimelate epimerase (276 aa).

Residues Asn-13, Gln-46, and Asn-66 each coordinate substrate. Cys-75 (proton donor) is an active-site residue. Substrate contacts are provided by residues 76–77, Asn-159, Asn-192, and 210–211; these read GN and ER. Catalysis depends on Cys-219, which acts as the Proton acceptor. 220–221 contacts substrate; the sequence is GT.

The protein belongs to the diaminopimelate epimerase family. As to quaternary structure, homodimer.

The protein localises to the cytoplasm. The enzyme catalyses (2S,6S)-2,6-diaminopimelate = meso-2,6-diaminopimelate. The protein operates within amino-acid biosynthesis; L-lysine biosynthesis via DAP pathway; DL-2,6-diaminopimelate from LL-2,6-diaminopimelate: step 1/1. Catalyzes the stereoinversion of LL-2,6-diaminopimelate (L,L-DAP) to meso-diaminopimelate (meso-DAP), a precursor of L-lysine and an essential component of the bacterial peptidoglycan. The sequence is that of Diaminopimelate epimerase from Pseudomonas savastanoi pv. phaseolicola (strain 1448A / Race 6) (Pseudomonas syringae pv. phaseolicola (strain 1448A / Race 6)).